Here is a 219-residue protein sequence, read N- to C-terminus: Elongation factor Ts (219 aa).

Positions 83-86 (TDFV) are involved in Mg(2+) ion dislocation from EF-Tu.

This sequence belongs to the EF-Ts family.

It is found in the cytoplasm. Functionally, associates with the EF-Tu.GDP complex and induces the exchange of GDP to GTP. It remains bound to the aminoacyl-tRNA.EF-Tu.GTP complex up to the GTP hydrolysis stage on the ribosome. In Synechococcus sp. (strain WH7803), this protein is Elongation factor Ts.